The sequence spans 84 residues: U8-theraphotoxin-Hhn1c 3 (84 aa).

Residues methionine 1–cysteine 21 form the signal peptide. Disulfide bonds link cysteine 23/cysteine 35, cysteine 29/cysteine 44, cysteine 34/cysteine 67, cysteine 54/cysteine 75, and cysteine 69/cysteine 81.

The protein belongs to the AVIT (prokineticin) family. In terms of tissue distribution, expressed by the venom gland.

It is found in the secreted. This is U8-theraphotoxin-Hhn1c 3 from Cyriopagopus hainanus (Chinese bird spider).